A 779-amino-acid chain; its full sequence is Pleckstrin homology domain-containing family A member 4 (779 aa).

A PH domain is found at Pro54–Arg153. Disordered stretches follow at residues Ser152–Pro355, Ala495–His669, and Ser694–Gly766. Position 164 is a phosphoserine (Ser164). Basic and acidic residues predominate over residues Val183 to Glu193. Composition is skewed to low complexity over residues Pro246–Ser259 and Gln324–Thr334. Positions Gln517–Leu527 are enriched in basic and acidic residues. Positions Ser528–Glu540 are enriched in low complexity. Ser562 carries the phosphoserine modification. Positions Arg567–Leu580 are enriched in polar residues. 2 stretches are compositionally biased toward low complexity: residues Gly608–Ser627 and Ser649–Ser659. The span at Val720–Gly740 shows a compositional bias: polar residues.

It localises to the cytoplasm. It is found in the membrane. Its function is as follows. Binds specifically to phosphatidylinositol 3-phosphate (PtdIns3P), but not to other phosphoinositides. The protein is Pleckstrin homology domain-containing family A member 4 (Plekha4) of Rattus norvegicus (Rat).